Consider the following 343-residue polypeptide: MERYEIVKDIGSGNFGVAKLVRDKFSKELFAVKFIERGQKIDEHVQREIMNHRSLIHPNIIRFKEVLLTATHLALVMEYAAGGELFGRICSAGRFSEDEARFFFQQLISGVNYCHSLQICHRDLKLENTLLDGSEAPRVKICDFGYSKSGVLHSQPKTTVGTPAYIAPEVLSTKEYDGKIADVWSCGVTLYVMLVGAYPFEDPSDPKDFRKTIGRILKAQYAIPDYVRVSDECRHLLSRIFVANPEKRITIEEIKNHSWFLKNLPVEMYEGSLMMNGPSTQTVEEIVWIIEEARKPITVATGLAGAGGSGGSSNGAIGSSSMDLDDLDTDFDDIDTADLLSPL.

The region spanning 4-260 (YEIVKDIGSG…IEEIKNHSWF (257 aa)) is the Protein kinase domain. ATP-binding positions include 10–18 (IGSGNFGVA) and Lys-33. Asp-123 functions as the Proton acceptor in the catalytic mechanism. A Phosphothreonine modification is found at Thr-158.

Belongs to the protein kinase superfamily. Ser/Thr protein kinase family. As to quaternary structure, interacts with I-2 and TOPP1. In terms of tissue distribution, expressed in seedlings.

The enzyme catalyses L-seryl-[protein] + ATP = O-phospho-L-seryl-[protein] + ADP + H(+). The catalysed reaction is L-threonyl-[protein] + ATP = O-phospho-L-threonyl-[protein] + ADP + H(+). In terms of biological role, involved in gene regulation and confers tolerance to drought and osmotic stress. The protein is Serine/threonine-protein kinase SRK2C (SRK2C) of Arabidopsis thaliana (Mouse-ear cress).